The chain runs to 239 residues: Endolytic peptidoglycan transglycosylase RlpA (239 aa).

A signal peptide spans 1–25; the sequence is MTLTRKTLFLLTAAFGTHSLQTASA. The SPOR domain occupies 160-239; it reads VAENKDIFID…GMVRAVLTAG (80 aa).

It belongs to the RlpA family.

In terms of biological role, lytic transglycosylase with a strong preference for naked glycan strands that lack stem peptides. This is Endolytic peptidoglycan transglycosylase RlpA from Neisseria meningitidis serogroup B (strain ATCC BAA-335 / MC58).